The sequence spans 248 residues: 23S rRNA (guanosine-2'-O-)-methyltransferase RlmB (248 aa).

Residues Gly198, Leu218, and Leu227 each contribute to the S-adenosyl-L-methionine site.

It belongs to the class IV-like SAM-binding methyltransferase superfamily. RNA methyltransferase TrmH family. RlmB subfamily.

The protein localises to the cytoplasm. The enzyme catalyses guanosine(2251) in 23S rRNA + S-adenosyl-L-methionine = 2'-O-methylguanosine(2251) in 23S rRNA + S-adenosyl-L-homocysteine + H(+). Functionally, specifically methylates the ribose of guanosine 2251 in 23S rRNA. This Pseudomonas putida (strain ATCC 47054 / DSM 6125 / CFBP 8728 / NCIMB 11950 / KT2440) protein is 23S rRNA (guanosine-2'-O-)-methyltransferase RlmB.